The following is a 184-amino-acid chain: Glutathione-regulated potassium-efflux system ancillary protein KefG (184 aa).

Belongs to the NAD(P)H dehydrogenase (quinone) family. KefG subfamily. Interacts with KefB.

The protein localises to the cell inner membrane. The enzyme catalyses a quinone + NADH + H(+) = a quinol + NAD(+). It carries out the reaction a quinone + NADPH + H(+) = a quinol + NADP(+). Its function is as follows. Regulatory subunit of a potassium efflux system that confers protection against electrophiles. Required for full activity of KefB. The protein is Glutathione-regulated potassium-efflux system ancillary protein KefG of Yersinia enterocolitica serotype O:8 / biotype 1B (strain NCTC 13174 / 8081).